Reading from the N-terminus, the 393-residue chain is NAD(P)H-quinone oxidoreductase subunit H, chloroplastic (393 aa).

It belongs to the complex I 49 kDa subunit family. In terms of assembly, NDH is composed of at least 16 different subunits, 5 of which are encoded in the nucleus.

Its subcellular location is the plastid. It localises to the chloroplast thylakoid membrane. The enzyme catalyses a plastoquinone + NADH + (n+1) H(+)(in) = a plastoquinol + NAD(+) + n H(+)(out). The catalysed reaction is a plastoquinone + NADPH + (n+1) H(+)(in) = a plastoquinol + NADP(+) + n H(+)(out). In terms of biological role, NDH shuttles electrons from NAD(P)H:plastoquinone, via FMN and iron-sulfur (Fe-S) centers, to quinones in the photosynthetic chain and possibly in a chloroplast respiratory chain. The immediate electron acceptor for the enzyme in this species is believed to be plastoquinone. Couples the redox reaction to proton translocation, and thus conserves the redox energy in a proton gradient. The protein is NAD(P)H-quinone oxidoreductase subunit H, chloroplastic of Draba nemorosa (Woodland whitlowgrass).